The chain runs to 389 residues: Jasmonate O-methyltransferase (389 aa).

Tyrosine 18 contacts S-adenosyl-L-homocysteine. Glutamine 25 is a jasmonate binding site. Cysteine 60, asparagine 65, aspartate 97, leucine 98, serine 142, and phenylalanine 143 together coordinate S-adenosyl-L-homocysteine. Jasmonate contacts are provided by histidine 163 and tryptophan 164. Mg(2+) is bound by residues asparagine 186, aspartate 272, phenylalanine 274, and asparagine 275.

The protein belongs to the methyltransferase superfamily. Type-7 methyltransferase family. Requires Mg(2+) as cofactor. Expressed in rosettes, cauline leaves and developing flowers but not in young seedlings.

It localises to the cytoplasm. The protein resides in the nucleus. It catalyses the reaction jasmonate + S-adenosyl-L-methionine = methyl (-)-jasmonate + S-adenosyl-L-homocysteine. The protein operates within lipid metabolism; oxylipin biosynthesis. In terms of biological role, catalyzes the methylation of jasmonate into methyljasmonate, a plant volatile that acts as an important cellular regulator mediating diverse developmental processes and defense responses. The polypeptide is Jasmonate O-methyltransferase (Arabidopsis thaliana (Mouse-ear cress)).